Consider the following 640-residue polypeptide: Chaperone protein DnaK (640 aa).

Phosphothreonine; by autocatalysis is present on threonine 199. Residues 606–621 (QQAAGAGAQQADGTGK) show a composition bias toward low complexity. A disordered region spans residues 606-640 (QQAAGAGAQQADGTGKAADDGVVDAEFEEVKEDNK). A compositionally biased stretch (acidic residues) spans 626 to 640 (GVVDAEFEEVKEDNK).

This sequence belongs to the heat shock protein 70 family.

Functionally, acts as a chaperone. The sequence is that of Chaperone protein DnaK from Cellvibrio japonicus (strain Ueda107) (Pseudomonas fluorescens subsp. cellulosa).